The chain runs to 658 residues: CXXC-type zinc finger protein 1 (658 aa).

Met1 bears the N-acetylmethionine mark. Residues 1–14 are compositionally biased toward acidic residues; that stretch reads MEGDASDPEPPDAG. A disordered region spans residues 1–20; sequence MEGDASDPEPPDAGEDSKSE. 2 positions are modified to phosphoserine: Ser6 and Ser19. Residues 28 to 76 form a PHD-type zinc finger; that stretch reads YCICRKPDINCFMIGCDNCNEWFHGDCIRITEKMAKAIREWYCRECREK. The interval 84–164 is disordered; it reads YRHKKSRERD…HQQQQQQQQI (81 aa). Over residues 90–120 the composition is skewed to basic and acidic residues; the sequence is RERDSSERDGSEPRDEGGGRKRPAPDPDLQR. Positions 153 to 163 are enriched in low complexity; it reads QHHQQQQQQQQ. The CXXC-type zinc finger occupies 162-211; it reads QQIKRSARMCGECEACRRTEDCGHCDFCRDMKKFGGPNKIRQKCRLRQCQ. Zn(2+) is bound by residues Cys171, Cys174, Cys177, Cys183, Cys186, Cys189, Cys205, and Cys210. 2 disordered regions span residues 221-285 and 327-373; these read FPSS…SDED and VKVK…DPAS. Phosphoserine is present on Ser226. Thr229 bears the Phosphothreonine mark. Lys252 participates in a covalent cross-link: Glycyl lysine isopeptide (Lys-Gly) (interchain with G-Cter in SUMO2). Positions 327 to 336 are enriched in basic residues; sequence VKVKHVKRRE. The segment covering 337–347 has biased composition (basic and acidic residues); it reads KKSEKKKDERY. Basic residues predominate over residues 348–360; sequence KRHRQKQKHKDKW. The span at 361-370 shows a compositional bias: basic and acidic residues; sequence KHPERADAKD. The stretch at 428–470 forms a coiled coil; it reads GKKLLERIRREQQSARTRLQEMERRFHELEAIILRAKQQAVRE.

In terms of assembly, component of the SET1 complex, at least composed of the catalytic subunit (SETD1A or SETD1B), WDR5, WDR82, RBBP5, ASH2L/ASH2, CXXC1/CFP1, HCFC1 and DPY30. Interacts with SETD1A. Interacts with ZNF335. Interacts with PRDM9; this interaction does not link PRDM9-activated recombination hotspot sites with DSB machinery and is not required for the hotspot recognition pathway. Interacts with histone H3K4me3. May be regulated by proteolysis.

Its subcellular location is the nucleus speckle. The protein resides in the nucleus. In terms of biological role, transcriptional activator that exhibits a unique DNA binding specificity for CpG unmethylated motifs with a preference for CpGG. This Bos taurus (Bovine) protein is CXXC-type zinc finger protein 1 (CXXC1).